The following is a 59-amino-acid chain: MAKLQITLTRSVIGRPETQRKTVEALGLKKTNSSVVVEDNPAIRGQINKVSHLVTVEEK.

It belongs to the universal ribosomal protein uL30 family. As to quaternary structure, part of the 50S ribosomal subunit.

The chain is Large ribosomal subunit protein uL30 from Staphylococcus saprophyticus subsp. saprophyticus (strain ATCC 15305 / DSM 20229 / NCIMB 8711 / NCTC 7292 / S-41).